A 117-amino-acid chain; its full sequence is uncharacterized protein (117 aa).

A signal peptide spans 1-23 (MVSEAEFMAALAKFAETSATASA).

This is an uncharacterized protein from Archaeoglobus fulgidus (strain ATCC 49558 / DSM 4304 / JCM 9628 / NBRC 100126 / VC-16).